The sequence spans 432 residues: Homogentisate 1,2-dioxygenase (432 aa).

Residue His-287 is the Proton acceptor of the active site. Positions 330 and 336 each coordinate Fe cation. Homogentisate-binding residues include Tyr-345 and His-366. His-366 serves as a coordination point for Fe cation.

The protein belongs to the homogentisate dioxygenase family. Hexamer; dimer of trimers. Requires Fe cation as cofactor.

The catalysed reaction is homogentisate + O2 = 4-maleylacetoacetate + H(+). It participates in amino-acid degradation; L-phenylalanine degradation; acetoacetate and fumarate from L-phenylalanine: step 4/6. Involved in the catabolism of homogentisate (2,5-dihydroxyphenylacetate or 2,5-OH-PhAc), a central intermediate in the degradation of phenylalanine and tyrosine. Catalyzes the oxidative ring cleavage of the aromatic ring of homogentisate to yield maleylacetoacetate. In Pseudomonas aeruginosa (strain ATCC 15692 / DSM 22644 / CIP 104116 / JCM 14847 / LMG 12228 / 1C / PRS 101 / PAO1), this protein is Homogentisate 1,2-dioxygenase.